Consider the following 419-residue polypeptide: 3-oxo-isoapionate-4-phosphate decarboxylase (419 aa).

Positions 179, 181, and 182 each coordinate Mg(2+). The residue at position 179 (Lys-179) is an N6-carboxylysine.

The protein belongs to the RuBisCO large chain family. Mg(2+) serves as cofactor.

It carries out the reaction 3-oxoisoapionate 4-phosphate + H(+) = L-erythrulose 1-phosphate + CO2. It functions in the pathway carbohydrate metabolism. Functionally, involved in catabolism of D-apiose. Catalyzes the decarboxylation of 3-oxo-isoapionate 4-phosphate to L-erythrulose 1-phosphate. The sequence is that of 3-oxo-isoapionate-4-phosphate decarboxylase from Rhizobium rhizogenes (strain K84 / ATCC BAA-868) (Agrobacterium radiobacter).